A 693-amino-acid chain; its full sequence is Heat shock protein homolog SSE1 (693 aa).

N-acetylserine is present on S2. Residue K195 forms a Glycyl lysine isopeptide (Lys-Gly) (interchain with G-Cter in ubiquitin) linkage. Position 242 is a phosphothreonine (T242). The interval 653 to 693 (IRSKQEASQMAAMAEKLAAQRKAEAEKKEEKKDTEGDVDMD) is disordered. Phosphoserine is present on S660. The segment covering 673–687 (RKAEAEKKEEKKDTE) has biased composition (basic and acidic residues).

Belongs to the heat shock protein 70 family.

The protein resides in the cytoplasm. Its function is as follows. Has a calcium-dependent calmodulin-binding activity. Required for normal growth at various temperatures. In Saccharomyces cerevisiae (strain ATCC 204508 / S288c) (Baker's yeast), this protein is Heat shock protein homolog SSE1 (SSE1).